Reading from the N-terminus, the 198-residue chain is Recombination protein RecR (198 aa).

The C4-type zinc finger occupies 59 to 74 (CSLCCNYTDHDPCPIC). The Toprim domain maps to 82–175 (TLLCIVEQPR…KVTRIAHGLP (94 aa)).

It belongs to the RecR family.

In terms of biological role, may play a role in DNA repair. It seems to be involved in an RecBC-independent recombinational process of DNA repair. It may act with RecF and RecO. This chain is Recombination protein RecR, found in Desulfitobacterium hafniense (strain DSM 10664 / DCB-2).